A 244-amino-acid polypeptide reads, in one-letter code: Large ribosomal subunit protein uL3 (244 aa).

It belongs to the universal ribosomal protein uL3 family. As to quaternary structure, part of the 50S ribosomal subunit. Forms a cluster with proteins L14 and L19.

Functionally, one of the primary rRNA binding proteins, it binds directly near the 3'-end of the 23S rRNA, where it nucleates assembly of the 50S subunit. In Aquifex pyrophilus, this protein is Large ribosomal subunit protein uL3.